The following is a 292-amino-acid chain: Elongation factor Ts (292 aa).

An involved in Mg(2+) ion dislocation from EF-Tu region spans residues Thr79–Val82.

It belongs to the EF-Ts family.

It is found in the cytoplasm. Its function is as follows. Associates with the EF-Tu.GDP complex and induces the exchange of GDP to GTP. It remains bound to the aminoacyl-tRNA.EF-Tu.GTP complex up to the GTP hydrolysis stage on the ribosome. The protein is Elongation factor Ts of Mycoplasmoides gallisepticum (strain R(low / passage 15 / clone 2)) (Mycoplasma gallisepticum).